A 354-amino-acid chain; its full sequence is tRNA N6-adenosine threonylcarbamoyltransferase (354 aa).

His115 and His119 together coordinate Fe cation. Residues 138–142, Asp171, Gly184, and Asn285 contribute to the substrate site; that span reads LVSGG. Residue Asp313 participates in Fe cation binding.

This sequence belongs to the KAE1 / TsaD family. Fe(2+) is required as a cofactor.

It is found in the cytoplasm. The enzyme catalyses L-threonylcarbamoyladenylate + adenosine(37) in tRNA = N(6)-L-threonylcarbamoyladenosine(37) in tRNA + AMP + H(+). Its function is as follows. Required for the formation of a threonylcarbamoyl group on adenosine at position 37 (t(6)A37) in tRNAs that read codons beginning with adenine. Is involved in the transfer of the threonylcarbamoyl moiety of threonylcarbamoyl-AMP (TC-AMP) to the N6 group of A37, together with TsaE and TsaB. TsaD likely plays a direct catalytic role in this reaction. The protein is tRNA N6-adenosine threonylcarbamoyltransferase of Albidiferax ferrireducens (strain ATCC BAA-621 / DSM 15236 / T118) (Rhodoferax ferrireducens).